The following is a 368-amino-acid chain: Glutaminyl-peptide cyclotransferase (368 aa).

Residues 1–23 form the signal peptide; sequence MARERRDSKAATFFCLAWALCLA. Residues Asn53 and Asn65 are each glycosylated (N-linked (GlcNAc...) asparagine). Cys143 and Cys169 are joined by a disulfide. Asp164 is a binding site for Zn(2+). Glu207 functions as the Proton acceptor in the catalytic mechanism. Glu208 contacts Zn(2+). The Proton acceptor role is filled by Asp254. The N-linked (GlcNAc...) asparagine glycan is linked to Asn292. Residue His336 coordinates Zn(2+). Asn352 carries an N-linked (GlcNAc...) asparagine glycan.

It belongs to the glutaminyl-peptide cyclotransferase family. In terms of tissue distribution, expressed by the venom gland.

Its subcellular location is the secreted. It carries out the reaction N-terminal L-glutaminyl-[peptide] = N-terminal 5-oxo-L-prolyl-[peptide] + NH4(+). Functionally, responsible for the biosynthesis of pyroglutamyl peptides. Has a bias against acidic and tryptophan residues adjacent to the N-terminal glutaminyl residue and a lack of importance of chain length after the second residue. Also catalyzes N-terminal pyroglutamate formation. This is Glutaminyl-peptide cyclotransferase (QPCT) from Bothrops jararaca (Jararaca).